A 273-amino-acid chain; its full sequence is Putative phosphoenolpyruvate synthase regulatory protein (273 aa).

An ADP-binding site is contributed by 154–161 (GVSRSGKT).

It belongs to the pyruvate, phosphate/water dikinase regulatory protein family. PSRP subfamily.

It catalyses the reaction [pyruvate, water dikinase] + ADP = [pyruvate, water dikinase]-phosphate + AMP + H(+). The enzyme catalyses [pyruvate, water dikinase]-phosphate + phosphate + H(+) = [pyruvate, water dikinase] + diphosphate. Functionally, bifunctional serine/threonine kinase and phosphorylase involved in the regulation of the phosphoenolpyruvate synthase (PEPS) by catalyzing its phosphorylation/dephosphorylation. The sequence is that of Putative phosphoenolpyruvate synthase regulatory protein from Neisseria meningitidis serogroup B (strain ATCC BAA-335 / MC58).